A 2053-amino-acid chain; its full sequence is Cell adhesion molecule DSCAML1 (2053 aa).

Residues Met-1–Pro-18 form the signal peptide. Ig-like C2-type domains are found at residues Glu-19–Ile-119, Pro-115–Ser-217, Pro-226–Thr-310, Pro-314–Gln-396, Pro-408–Asn-501, Pro-506–Ser-586, Pro-596–Ile-685, Pro-690–Thr-784, and Pro-788–Gln-885. The Extracellular segment spans residues Glu-19–Lys-1591. Disulfide bonds link Cys-47-Cys-103, Cys-146-Cys-198, Cys-247-Cys-294, Cys-336-Cys-386, Cys-429-Cys-485, Cys-526-Cys-575, and Cys-617-Cys-669. A glycan (N-linked (GlcNAc...) asparagine) is linked at Asn-79. 2 N-linked (GlcNAc...) asparagine glycosylation sites follow: Asn-368 and Asn-471. Residues Asn-666 and Asn-710 are each glycosylated (N-linked (GlcNAc...) asparagine). The cysteines at positions 711 and 767 are disulfide-linked. Residue Asn-809 is glycosylated (N-linked (GlcNAc...) asparagine). A disulfide bond links Cys-810 and Cys-867. 4 consecutive Fibronectin type-III domains span residues Pro-887–Ala-984, Pro-989–Asp-1088, Pro-1093–Asp-1189, and Pro-1193–Ala-1288. N-linked (GlcNAc...) asparagine glycosylation is found at Asn-1144 and Asn-1162. Residues Glu-1278–Asn-1377 form the Ig-like C2-type 10 domain. Cys-1311 and Cys-1363 are disulfide-bonded. A glycan (N-linked (GlcNAc...) asparagine) is linked at Asn-1345. Fibronectin type-III domains follow at residues Pro-1383–Arg-1477 and Glu-1478–Pro-1578. A glycan (N-linked (GlcNAc...) asparagine) is linked at Asn-1561. Residues Leu-1592 to Val-1612 form a helical membrane-spanning segment. Residues Arg-1613–Val-2053 lie on the Cytoplasmic side of the membrane. 4 disordered regions span residues Leu-1716–Arg-1741, His-1773–Ser-1803, Ser-1840–Ser-1862, and Leu-1974–Val-2053. A compositionally biased stretch (basic residues) spans Lys-1732–Arg-1741. Over residues His-1773–Gln-1789 the composition is skewed to polar residues. Over residues Pro-1977–Ser-1993 the composition is skewed to pro residues.

In terms of assembly, homodimer; mediates homophilic interactions to promote cell adhesion. In terms of tissue distribution, in the retina, expressed in the rod photoreceptors, AII amacrine cells and rod bipolar cells (at protein level).

The protein resides in the cell membrane. It is found in the synapse. Its function is as follows. Cell adhesion molecule that plays a role in neuronal self-avoidance. Promotes repulsion between specific neuronal processes of either the same cell or the same subtype of cells. Promotes both isoneuronal self-avoidance for creating an orderly neurite arborization in retinal rod bipolar cells and heteroneuronal self-avoidance to maintain mosaic spacing between AII amacrine cells. Adhesion molecule that promotes lamina-specific synaptic connections in the retina: expressed in specific subsets of interneurons and retinal ganglion cells (RGCs) and promotes synaptic connectivity via homophilic interactions. This chain is Cell adhesion molecule DSCAML1 (Dscaml1), found in Mus musculus (Mouse).